Consider the following 218-residue polypeptide: Insulin-induced gene 2 protein (218 aa).

The Cytoplasmic portion of the chain corresponds to 1–21 (MGETDNAPRGPPSFLPHKMNL). The chain crosses the membrane as a helical span at residues 22 to 44 (LLRGLLLFLIGVFLALVLNLLQV). The Lumenal portion of the chain corresponds to 45–63 (QRNVTLFPPDVLSSLFSSA). Residues 64–81 (WWVPLCCGTAAAAIGLLY) form a helical membrane-spanning segment. At 82–96 (PCIDRHLGEPHKFKR) the chain is on the cytoplasmic side. The chain crosses the membrane as a helical span at residues 97–119 (EWSSVMRCVAVFVGINHASAKVD). At 120–122 (FAN) the chain is on the lumenal side. The helical transmembrane segment at 123 to 141 (NTQLSLTLAALSIGLWWTF) threads the bilayer. At 142–146 (DRSRS) the chain is on the cytoplasmic side. A helical transmembrane segment spans residues 147–168 (GLGLGIGISFFATVVSQLLVYN). Residues 169 to 182 (GVYEYTAPDFLYVR) lie on the Lumenal side of the membrane. Residues 183–200 (SWLPCIFFAGGITMGNIG) traverse the membrane as a helical segment. The Cytoplasmic portion of the chain corresponds to 201–218 (RQLEMYERLALVEKSHRD). Residues 212-218 (VEKSHRD) carry the KxHxx motif.

This sequence belongs to the INSIG family. As to quaternary structure, interacts with scap; interaction is direct and only takes place in the presence of sterols; it prevents interaction between scap and the coat protein complex II (COPII). Associates with the SCAP-SREBP complex; association is mediated via its interaction with scap and only takes place in the presence of sterols.

The protein localises to the endoplasmic reticulum membrane. Oxysterol-binding protein that mediates feedback control of cholesterol synthesis by controlling both endoplasmic reticulum to Golgi transport of scap and degradation of hmgcr. Acts as a negative regulator of cholesterol biosynthesis by mediating the retention of the SCAP-SREBP complex in the endoplasmic reticulum, thereby blocking the processing of sterol regulatory element-binding proteins (SREBPs). Binds oxysterol, including 22-hydroxycholesterol, 24-hydroxycholesterol, 25-hydroxycholesterol and 27-hydroxycholesterol, regulating interaction with scap and retention of the SCAP-SREBP complex in the endoplasmic reticulum. In presence of oxysterol, interacts with scap, retaining the SCAP-SREBP complex in the endoplasmic reticulum, thereby preventing scap from escorting SREBPs to the Golgi. Sterol deprivation reduce oxysterol-binding, disrupting the interaction between insig2 and scap, thereby promoting Golgi transport of the SCAP-SREBP complex, followed by processing and nuclear translocation of SREBPs. Also regulates cholesterol synthesis by regulating degradation of hmgcr. This chain is Insulin-induced gene 2 protein, found in Xenopus tropicalis (Western clawed frog).